A 603-amino-acid chain; its full sequence is Beta-hexosaminidase (603 aa).

Residues 1–19 (MAYFRLYAVLLAVASSVAA) form the signal peptide. Residues D225, H278, and E349 each act as charge relay system in the active site. A disulfide bridge connects residues C293 and C354. N-linked (GlcNAc...) asparagine glycosylation occurs at N356. A disulfide bridge links C451 with C486. N-linked (GlcNAc...) asparagine glycosylation is found at N503 and N528. C586 and C593 are joined by a disulfide.

Belongs to the glycosyl hydrolase 20 family. In terms of assembly, homodimer.

It is found in the secreted. The catalysed reaction is Hydrolysis of terminal non-reducing N-acetyl-D-hexosamine residues in N-acetyl-beta-D-hexosaminides.. Its function is as follows. Part of the binary chitinolytic system. Involved in hydrolysis of chitobiose and higher chito-oligomers (produced from cell wall chitin by endochitinases), thus contributing to the formation of germ tubes, fruit-bodies and septa during hyphenation. Hydrolyzes synthetic substrates p-nitrophenyl-beta-N-acetyl-glucosamine (pNP-beta-GlcNAc), p-nitrophenyl-beta-N-acetyl-galactosamine (pNP-beta-GalNAc) and 5-bromo-4-chloro-3-indoyl-beta-D-N-glucosaminide (X-GlcNAc). This chain is Beta-hexosaminidase, found in Emericella nidulans (Aspergillus nidulans).